Reading from the N-terminus, the 622-residue chain is Histone-arginine methyltransferase CARMER (622 aa).

The SAM-dependent MTase PRMT-type domain occupies 118–425 (ASQYFQFYGY…QRQSYDVEID (308 aa)). S-adenosyl-L-methionine-binding residues include glutamine 131, arginine 140, glycine 164, glutamate 186, glutamate 215, and threonine 243. Position 478 is an asymmetric dimethylarginine; by autocatalysis (arginine 478). 2 disordered regions span residues 513 to 556 (ANGG…QQQQ) and 602 to 622 (QPIL…NQFY). Positions 536-556 (QQQQQQQQQQQQAAVGPQQQQ) are enriched in low complexity.

The protein belongs to the class I-like SAM-binding methyltransferase superfamily. Protein arginine N-methyltransferase family. Homodimer. Post-translationally, the dimethylated protein is the major form.

It localises to the cytoplasm. The protein resides in the nucleus. It carries out the reaction L-arginyl-[protein] + 2 S-adenosyl-L-methionine = N(omega),N(omega)-dimethyl-L-arginyl-[protein] + 2 S-adenosyl-L-homocysteine + 2 H(+). Functionally, methylates (mono- and asymmetric dimethylation) the guanidino nitrogens of arginyl residues in proteins. May methylate histone H3 at 'Arg-17' and activate transcription via chromatin remodeling. The protein is Histone-arginine methyltransferase CARMER of Anopheles gambiae (African malaria mosquito).